Here is a 264-residue protein sequence, read N- to C-terminus: MLSHNTMVKQRKQQATAIMKEVHGNDVDGMDLGKKVSIPRDIMLEELSHLSNRGARLFKMRQRRSDKYTFENFQYQSRAQINHSIAMQNGKVDGSNLEGGSQQAPLTPPNTPDPRSPPNPDNIAPGYSGPLKEIPPEKFNTTAVPKYYQSPWEQAISNDPELLEALYPKLFKPEGKAELPDYRSFNRVATPFGGFEKASRMVKFKVPDFELLLLTDPRFMSFVNPLSGRRSFNRTPKGWISENIPIVITTEPTDDTTVPESEDL.

Arg-53 carries the post-translational modification Omega-N-methylarginine. The disordered stretch occupies residues 90–135 (GKVDGSNLEGGSQQAPLTPPNTPDPRSPPNPDNIAPGYSGPLKEIP). Ser-101 bears the Phosphoserine mark. A compositionally biased stretch (pro residues) spans 106-120 (LTPPNTPDPRSPPNP). A phosphothreonine mark is found at Thr-107 and Thr-111. Ser-116 is subject to Phosphoserine.

The protein belongs to the myozenin family. In terms of assembly, interacts via its C-terminus with spectrin repeats 3 and 4 of ACTN2. Interacts with ACTN1, LDB3, MYOT and PPP3CA.

It is found in the cytoplasm. Its subcellular location is the myofibril. The protein resides in the sarcomere. The protein localises to the z line. Myozenins may serve as intracellular binding proteins involved in linking Z line proteins such as alpha-actinin, gamma-filamin, TCAP/telethonin, LDB3/ZASP and localizing calcineurin signaling to the sarcomere. Plays an important role in the modulation of calcineurin signaling. May play a role in myofibrillogenesis. The chain is Myozenin-2 (MYOZ2) from Pongo abelii (Sumatran orangutan).